Consider the following 321-residue polypeptide: Ribosomal RNA small subunit methyltransferase H (321 aa).

Residues 40 to 42 (GGH), Asp60, Phe84, Asp106, and Gln113 each bind S-adenosyl-L-methionine.

The protein belongs to the methyltransferase superfamily. RsmH family.

It is found in the cytoplasm. The enzyme catalyses cytidine(1402) in 16S rRNA + S-adenosyl-L-methionine = N(4)-methylcytidine(1402) in 16S rRNA + S-adenosyl-L-homocysteine + H(+). In terms of biological role, specifically methylates the N4 position of cytidine in position 1402 (C1402) of 16S rRNA. This Haemophilus influenzae (strain ATCC 51907 / DSM 11121 / KW20 / Rd) protein is Ribosomal RNA small subunit methyltransferase H.